The primary structure comprises 129 residues: MAKEAARVRRRERKNITSGVAHVNSTFNNTMITITDAQGNAIAWSSAGAKGFKGSRKSTPFAAQIAAEDCAKKAQEHGMKSLEVEVCGPGSGRESALRALQAAGFMITSIRDVTPIPHNGCRPRKKRRV.

It belongs to the universal ribosomal protein uS11 family. As to quaternary structure, part of the 30S ribosomal subunit. Interacts with proteins S7 and S18. Binds to IF-3.

Its function is as follows. Located on the platform of the 30S subunit, it bridges several disparate RNA helices of the 16S rRNA. Forms part of the Shine-Dalgarno cleft in the 70S ribosome. This is Small ribosomal subunit protein uS11 from Agrobacterium fabrum (strain C58 / ATCC 33970) (Agrobacterium tumefaciens (strain C58)).